A 296-amino-acid chain; its full sequence is Phosphatidylserine decarboxylase proenzyme (296 aa).

Catalysis depends on charge relay system; for autoendoproteolytic cleavage activity residues Asp100, His157, and Ser263. Ser263 (schiff-base intermediate with substrate; via pyruvic acid; for decarboxylase activity) is an active-site residue. At Ser263 the chain carries Pyruvic acid (Ser); by autocatalysis.

The protein belongs to the phosphatidylserine decarboxylase family. PSD-B subfamily. Prokaryotic type I sub-subfamily. In terms of assembly, heterodimer of a large membrane-associated beta subunit and a small pyruvoyl-containing alpha subunit. Pyruvate is required as a cofactor. In terms of processing, is synthesized initially as an inactive proenzyme. Formation of the active enzyme involves a self-maturation process in which the active site pyruvoyl group is generated from an internal serine residue via an autocatalytic post-translational modification. Two non-identical subunits are generated from the proenzyme in this reaction, and the pyruvate is formed at the N-terminus of the alpha chain, which is derived from the carboxyl end of the proenzyme. The autoendoproteolytic cleavage occurs by a canonical serine protease mechanism, in which the side chain hydroxyl group of the serine supplies its oxygen atom to form the C-terminus of the beta chain, while the remainder of the serine residue undergoes an oxidative deamination to produce ammonia and the pyruvoyl prosthetic group on the alpha chain. During this reaction, the Ser that is part of the protease active site of the proenzyme becomes the pyruvoyl prosthetic group, which constitutes an essential element of the active site of the mature decarboxylase.

It is found in the cell membrane. It catalyses the reaction a 1,2-diacyl-sn-glycero-3-phospho-L-serine + H(+) = a 1,2-diacyl-sn-glycero-3-phosphoethanolamine + CO2. The protein operates within phospholipid metabolism; phosphatidylethanolamine biosynthesis; phosphatidylethanolamine from CDP-diacylglycerol: step 2/2. Catalyzes the formation of phosphatidylethanolamine (PtdEtn) from phosphatidylserine (PtdSer). The polypeptide is Phosphatidylserine decarboxylase proenzyme (Actinobacillus pleuropneumoniae serotype 7 (strain AP76)).